A 435-amino-acid chain; its full sequence is Serine hydroxymethyltransferase 2 (435 aa).

(6S)-5,6,7,8-tetrahydrofolate is bound by residues L135 and 139-141 (GHL). An N6-(pyridoxal phosphate)lysine modification is found at K244. E260 serves as a coordination point for (6S)-5,6,7,8-tetrahydrofolate.

Belongs to the SHMT family. Homodimer. The cofactor is pyridoxal 5'-phosphate.

It localises to the cytoplasm. The enzyme catalyses (6R)-5,10-methylene-5,6,7,8-tetrahydrofolate + glycine + H2O = (6S)-5,6,7,8-tetrahydrofolate + L-serine. It participates in one-carbon metabolism; tetrahydrofolate interconversion. It functions in the pathway amino-acid biosynthesis; glycine biosynthesis; glycine from L-serine: step 1/1. In terms of biological role, catalyzes the reversible interconversion of serine and glycine with tetrahydrofolate (THF) serving as the one-carbon carrier. This reaction serves as the major source of one-carbon groups required for the biosynthesis of purines, thymidylate, methionine, and other important biomolecules. Also exhibits THF-independent aldolase activity toward beta-hydroxyamino acids, producing glycine and aldehydes, via a retro-aldol mechanism. The polypeptide is Serine hydroxymethyltransferase 2 (Vibrio cholerae serotype O1 (strain ATCC 39315 / El Tor Inaba N16961)).